A 151-amino-acid chain; its full sequence is Large ribosomal subunit protein bL9 (151 aa).

The protein belongs to the bacterial ribosomal protein bL9 family.

Functionally, binds to the 23S rRNA. This Pelobacter propionicus (strain DSM 2379 / NBRC 103807 / OttBd1) protein is Large ribosomal subunit protein bL9.